The sequence spans 464 residues: Uronate isomerase (464 aa).

This sequence belongs to the metallo-dependent hydrolases superfamily. Uronate isomerase family.

It catalyses the reaction D-glucuronate = D-fructuronate. The enzyme catalyses aldehydo-D-galacturonate = keto-D-tagaturonate. It participates in carbohydrate metabolism; pentose and glucuronate interconversion. The polypeptide is Uronate isomerase (Caldicellulosiruptor saccharolyticus (strain ATCC 43494 / DSM 8903 / Tp8T 6331)).